The chain runs to 96 residues: Co-chaperonin GroES (96 aa).

Belongs to the GroES chaperonin family. In terms of assembly, heptamer of 7 subunits arranged in a ring. Interacts with the chaperonin GroEL.

It localises to the cytoplasm. Its function is as follows. Together with the chaperonin GroEL, plays an essential role in assisting protein folding. The GroEL-GroES system forms a nano-cage that allows encapsulation of the non-native substrate proteins and provides a physical environment optimized to promote and accelerate protein folding. GroES binds to the apical surface of the GroEL ring, thereby capping the opening of the GroEL channel. This chain is Co-chaperonin GroES, found in Aromatoleum aromaticum (strain DSM 19018 / LMG 30748 / EbN1) (Azoarcus sp. (strain EbN1)).